The following is a 222-amino-acid chain: Ubiquitin-conjugating enzyme E2 S (222 aa).

M1 bears the N-acetylmethionine mark. In terms of domain architecture, UBC core spans 11–157 (HIIRLVYKEV…ARLLTEIHGG (147 aa)). The Glycyl thioester intermediate role is filled by C95. The segment at 156–222 (GGAGGPSGRA…TDKKRALRRL (67 aa)) is disordered. S173 is modified (phosphoserine). Positions 208-222 (AAKKKTDKKRALRRL) are enriched in basic residues.

It belongs to the ubiquitin-conjugating enzyme family. Component of the APC/C complex, composed of at least 14 distinct subunits that assemble into a complex of at least 19 chains with a combined molecular mass of around 1.2 MDa. Within this complex, directly interacts with ANAPC2 and ANAPC4. Interacts with CDC20, FZR1/CDH1 and VHL. Autoubiquitinated by the APC/C complex during G1, leading to its degradation by the proteasome.

The enzyme catalyses S-ubiquitinyl-[E1 ubiquitin-activating enzyme]-L-cysteine + [E2 ubiquitin-conjugating enzyme]-L-cysteine = [E1 ubiquitin-activating enzyme]-L-cysteine + S-ubiquitinyl-[E2 ubiquitin-conjugating enzyme]-L-cysteine.. It participates in protein modification; protein ubiquitination. Accepts ubiquitin from the E1 complex and catalyzes its covalent attachment to other proteins. Catalyzes 'Lys-11'-linked polyubiquitination. Acts as an essential factor of the anaphase promoting complex/cyclosome (APC/C), a cell cycle-regulated ubiquitin ligase that controls progression through mitosis. Acts by specifically elongating 'Lys-11'-linked polyubiquitin chains initiated by the E2 enzyme UBE2C/UBCH10 on APC/C substrates, enhancing the degradation of APC/C substrates by the proteasome and promoting mitotic exit. Also acts by elongating ubiquitin chains initiated by the E2 enzyme UBE2D1/UBCH5 in vitro; it is however unclear whether UBE2D1/UBCH5 acts as an E2 enzyme for the APC/C in vivo. Also involved in ubiquitination and subsequent degradation of VHL, resulting in an accumulation of HIF1A. In vitro able to promote polyubiquitination using all 7 ubiquitin Lys residues, except 'Lys-48'-linked polyubiquitination. The polypeptide is Ubiquitin-conjugating enzyme E2 S (UBE2S) (Homo sapiens (Human)).